Consider the following 355-residue polypeptide: Phospho-N-acetylmuramoyl-pentapeptide-transferase (355 aa).

10 helical membrane passes run 3–23 (GVLI…PWVI), 56–76 (VIIV…GIGF), 80–100 (GLLV…DDYI), 120–140 (AAVA…AGLL), 156–176 (VGII…SNAV), 185–205 (LAAG…FWQF), 224–244 (PLDV…FLWW), 251–271 (IFMG…IAIV), 276–296 (LLLV…MIQV), and 330–350 (FWIV…AEFL).

This sequence belongs to the glycosyltransferase 4 family. MraY subfamily. The cofactor is Mg(2+).

The protein resides in the cell membrane. It carries out the reaction UDP-N-acetyl-alpha-D-muramoyl-L-alanyl-gamma-D-glutamyl-meso-2,6-diaminopimeloyl-D-alanyl-D-alanine + di-trans,octa-cis-undecaprenyl phosphate = di-trans,octa-cis-undecaprenyl diphospho-N-acetyl-alpha-D-muramoyl-L-alanyl-D-glutamyl-meso-2,6-diaminopimeloyl-D-alanyl-D-alanine + UMP. It functions in the pathway cell wall biogenesis; peptidoglycan biosynthesis. Functionally, catalyzes the initial step of the lipid cycle reactions in the biosynthesis of the cell wall peptidoglycan: transfers peptidoglycan precursor phospho-MurNAc-pentapeptide from UDP-MurNAc-pentapeptide onto the lipid carrier undecaprenyl phosphate, yielding undecaprenyl-pyrophosphoryl-MurNAc-pentapeptide, known as lipid I. This Frankia casuarinae (strain DSM 45818 / CECT 9043 / HFP020203 / CcI3) protein is Phospho-N-acetylmuramoyl-pentapeptide-transferase.